The chain runs to 573 residues: Estrogen receptor beta (573 aa).

Residues 15–170 (QEVDSSKVGE…CFAGKGDMHF (156 aa)) form a modulating region. 2 consecutive NR C4-type zinc fingers follow at residues 171 to 191 (CAVC…CEGC) and 207 to 231 (CPAT…LRKC). Residues 171–236 (CAVCHDYASG…RLRKCYEVGM (66 aa)) constitute a DNA-binding region (nuclear receptor). One can recognise an NR LBD domain in the interval 291 to 527 (TPEQLINRII…DLLLEMLDAN (237 aa)). 2 stretches are compositionally biased toward low complexity: residues 534-552 (MSAS…AQSQ) and 559-573 (CSGE…SSTI). A disordered region spans residues 534–573 (MSASYSSQPSPWSQAAQSQPGPPPSCSGECPCPPKESSTI).

It belongs to the nuclear hormone receptor family. NR3 subfamily. In terms of assembly, binds DNA as a homodimer. Can form a heterodimer with ER-alpha. Liver.

It localises to the nucleus. Binds estrogens with an affinity similar to that of ER-alpha, and activates expression of reporter genes containing estrogen response elements (ERE) in an estrogen-dependent manner. The chain is Estrogen receptor beta (esr2) from Anguilla japonica (Japanese eel).